Consider the following 379-residue polypeptide: Alkanesulfonate monooxygenase (379 aa).

This sequence belongs to the SsuD family.

The catalysed reaction is an alkanesulfonate + FMNH2 + O2 = an aldehyde + FMN + sulfite + H2O + 2 H(+). Functionally, catalyzes the desulfonation of aliphatic sulfonates. The sequence is that of Alkanesulfonate monooxygenase from Pseudomonas savastanoi pv. phaseolicola (strain 1448A / Race 6) (Pseudomonas syringae pv. phaseolicola (strain 1448A / Race 6)).